Here is a 325-residue protein sequence, read N- to C-terminus: Beta-ketoacyl-[acyl-carrier-protein] synthase III (325 aa).

Active-site residues include cysteine 119 and histidine 252. The tract at residues 253-257 (QANIR) is ACP-binding. Asparagine 282 is a catalytic residue.

This sequence belongs to the thiolase-like superfamily. FabH family. In terms of assembly, homodimer.

It is found in the cytoplasm. The catalysed reaction is malonyl-[ACP] + acetyl-CoA + H(+) = 3-oxobutanoyl-[ACP] + CO2 + CoA. Its pathway is lipid metabolism; fatty acid biosynthesis. In terms of biological role, catalyzes the condensation reaction of fatty acid synthesis by the addition to an acyl acceptor of two carbons from malonyl-ACP. Catalyzes the first condensation reaction which initiates fatty acid synthesis and may therefore play a role in governing the total rate of fatty acid production. Possesses both acetoacetyl-ACP synthase and acetyl transacylase activities. Its substrate specificity determines the biosynthesis of branched-chain and/or straight-chain of fatty acids. This Polaromonas sp. (strain JS666 / ATCC BAA-500) protein is Beta-ketoacyl-[acyl-carrier-protein] synthase III.